The following is a 561-amino-acid chain: Mercuric reductase (561 aa).

The HMA domain occupies Met1 to Thr65. Residues Cys11 and Cys14 each contribute to the a metal cation site. 3 residues coordinate FAD: Ala110, Gly130, and Thr135. A disulfide bridge connects residues Cys136 and Cys141. The FAD site is built by Lys145, Ala211, Asp403, and Val411. Residues Cys558 and Cys559 each contribute to the Hg(2+) site.

Belongs to the class-I pyridine nucleotide-disulfide oxidoreductase family. As to quaternary structure, homodimer. Requires FAD as cofactor.

The enzyme catalyses Hg + NADP(+) + H(+) = Hg(2+) + NADPH. Functionally, resistance to Hg(2+) in bacteria appears to be governed by a specialized system which includes mercuric reductase. MerA protein is responsible for volatilizing mercury as Hg(0). This chain is Mercuric reductase (merA), found in Enterobacter agglomerans (Erwinia herbicola).